The following is a 131-amino-acid chain: Small ribosomal subunit protein uS9 (131 aa).

This sequence belongs to the universal ribosomal protein uS9 family.

The sequence is that of Small ribosomal subunit protein uS9 from Mycoplasmopsis synoviae (strain 53) (Mycoplasma synoviae).